We begin with the raw amino-acid sequence, 425 residues long: Dihydroorotase (425 aa).

Zn(2+) contacts are provided by His56 and His58. Substrate contacts are provided by residues 58-60 and Asn90; that span reads HYR. Zn(2+) contacts are provided by Asp148, His175, and His228. Asn274 is a binding site for substrate. Asp301 contributes to the Zn(2+) binding site. Residue Asp301 is part of the active site. Residues His305 and 319–320 contribute to the substrate site; that span reads FG.

The protein belongs to the metallo-dependent hydrolases superfamily. DHOase family. Class I DHOase subfamily. It depends on Zn(2+) as a cofactor.

It carries out the reaction (S)-dihydroorotate + H2O = N-carbamoyl-L-aspartate + H(+). It functions in the pathway pyrimidine metabolism; UMP biosynthesis via de novo pathway; (S)-dihydroorotate from bicarbonate: step 3/3. Catalyzes the reversible cyclization of carbamoyl aspartate to dihydroorotate. This chain is Dihydroorotase, found in Lactobacillus delbrueckii subsp. bulgaricus (strain ATCC BAA-365 / Lb-18).